Reading from the N-terminus, the 436-residue chain is GTPase Der (436 aa).

2 consecutive EngA-type G domains span residues 4-167 (PVVA…KDEE) and 176-351 (IKLS…ENHK). GTP-binding positions include 10–17 (GRPNVGKS), 57–61 (DTGGI), 119–122 (NKVD), 182–189 (GRPNVGKS), 229–233 (DTAGM), and 294–297 (NKWD). The 85-residue stretch at 352–436 (KRVQSSTLNE…PIRIIPRKRN (85 aa)) folds into the KH-like domain.

This sequence belongs to the TRAFAC class TrmE-Era-EngA-EngB-Septin-like GTPase superfamily. EngA (Der) GTPase family. As to quaternary structure, associates with the 50S ribosomal subunit.

Its function is as follows. GTPase that plays an essential role in the late steps of ribosome biogenesis. The protein is GTPase Der of Staphylococcus carnosus (strain TM300).